Consider the following 321-residue polypeptide: Fe-S cluster assembly protein DRE2 (321 aa).

An N-terminal SAM-like domain region spans residues 1–131 (MERMLLLSPP…KPDFGPENIV (131 aa)). Positions 132 to 213 (PLKLGKRKPV…EETLLDGEDM (82 aa)) are linker. Residues Cys223, Cys234, Cys237, and Cys239 each coordinate [2Fe-2S] cluster. The segment at 223–239 (CRPKAGKRRRACKDCTC) is fe-S binding site A. [4Fe-4S] cluster is bound by residues Cys284, Cys287, Cys295, and Cys298. 2 short sequence motifs (cx2C motif) span residues 284 to 287 (CGNC) and 295 to 298 (CDGC). The tract at residues 284 to 298 (CGNCALGDAFRCDGC) is fe-S binding site B.

Belongs to the anamorsin family. In terms of assembly, monomer. Interacts with TAH18. Interacts with MIA40. Requires [2Fe-2S] cluster as cofactor. The cofactor is [4Fe-4S] cluster.

It is found in the cytoplasm. It localises to the mitochondrion intermembrane space. Component of the cytosolic iron-sulfur (Fe-S) protein assembly (CIA) machinery required for the maturation of extramitochondrial Fe-S proteins. Part of an electron transfer chain functioning in an early step of cytosolic Fe-S biogenesis, facilitating the de novo assembly of a [4Fe-4S] cluster on the scaffold complex CFD1-NBP35. Electrons are transferred to DRE2 from NADPH via the FAD- and FMN-containing protein TAH18. TAH18-DRE2 are also required for the assembly of the diferric tyrosyl radical cofactor of ribonucleotide reductase (RNR), probably by providing electrons for reduction during radical cofactor maturation in the catalytic small subunit RNR2. The polypeptide is Fe-S cluster assembly protein DRE2 (Coccidioides immitis (strain RS) (Valley fever fungus)).